The following is a 566-amino-acid chain: Cyclin G (566 aa).

The region spanning 285–368 (MWYELPSDVL…VIANKLGVQM (84 aa)) is the Cyclin N-terminal domain.

This sequence belongs to the cyclin family. Cyclin G subfamily. As to quaternary structure, interacts with corto. Interacts with the cyclin-dependent kinases Cdk2 and Cdk4. Interacts with Brca2 and Rad9. Interacts with polycomb protein Asx. Interacts with protein phosphatase 2A subunit wdb.

Its subcellular location is the chromosome. Cyclin with roles in multiple processes including transcription, meiotic recombination repair, cell cycle regulation, and promotion of normal growth and metabolism. Binds to the promoter region of the homeobox gene Abd-B and is involved in maintaining Abd-B expression in the pupal epithelium. Involved in the transcriptional repression of the homeotic genes Scr and Ubx. Plays a role in meiotic recombination repair of DNA double-strand breaks which ensures efficient translation of grk and promotes grk activity in the oocyte, leading to oocyte dorso-ventral axis formation following secretion of grk from the oocyte and its binding to Egfr in the directly overlying follicle cells. Negatively regulates the binding of serine/threonine-protein kinase Akt1 to the protein phosphatase 2A subunit wdb, promoting normal growth and metabolism. Required for the formation of bilateral symmetry. Negatively regulates cell cycle progression by preventing G1 to S transition and retarding S-phase progression. The sequence is that of Cyclin G from Drosophila melanogaster (Fruit fly).